Reading from the N-terminus, the 122-residue chain is Large ribosomal subunit protein uL18 (122 aa).

It belongs to the universal ribosomal protein uL18 family. Part of the 50S ribosomal subunit; part of the 5S rRNA/L5/L18/L25 subcomplex. Contacts the 5S and 23S rRNAs.

Functionally, this is one of the proteins that bind and probably mediate the attachment of the 5S RNA into the large ribosomal subunit, where it forms part of the central protuberance. This Thermosipho melanesiensis (strain DSM 12029 / CIP 104789 / BI429) protein is Large ribosomal subunit protein uL18.